Here is a 363-residue protein sequence, read N- to C-terminus: UDP-N-acetylglucosamine--N-acetylmuramyl-(pentapeptide) pyrophosphoryl-undecaprenol N-acetylglucosamine transferase (363 aa).

Residues Thr-14–Gly-16, Arg-171, Ser-200, and Gln-290 contribute to the UDP-N-acetyl-alpha-D-glucosamine site.

It belongs to the glycosyltransferase 28 family. MurG subfamily.

It is found in the cell inner membrane. The catalysed reaction is di-trans,octa-cis-undecaprenyl diphospho-N-acetyl-alpha-D-muramoyl-L-alanyl-D-glutamyl-meso-2,6-diaminopimeloyl-D-alanyl-D-alanine + UDP-N-acetyl-alpha-D-glucosamine = di-trans,octa-cis-undecaprenyl diphospho-[N-acetyl-alpha-D-glucosaminyl-(1-&gt;4)]-N-acetyl-alpha-D-muramoyl-L-alanyl-D-glutamyl-meso-2,6-diaminopimeloyl-D-alanyl-D-alanine + UDP + H(+). It participates in cell wall biogenesis; peptidoglycan biosynthesis. Its function is as follows. Cell wall formation. Catalyzes the transfer of a GlcNAc subunit on undecaprenyl-pyrophosphoryl-MurNAc-pentapeptide (lipid intermediate I) to form undecaprenyl-pyrophosphoryl-MurNAc-(pentapeptide)GlcNAc (lipid intermediate II). This is UDP-N-acetylglucosamine--N-acetylmuramyl-(pentapeptide) pyrophosphoryl-undecaprenol N-acetylglucosamine transferase from Borreliella burgdorferi (strain ATCC 35210 / DSM 4680 / CIP 102532 / B31) (Borrelia burgdorferi).